The following is a 215-amino-acid chain: MSLPPVIAIDGPTASGKGTVASLVAEKLGFHYLDSGALYRLVALASEKQGIDVKNGQELGLLVPKLLISFKNSQIFLNGENVTDAIRVESIGLRASALAVHPEIRSALVGLQRSFRQSPGLVADGRDTASVIFPDAILKVFLTATAAARAGRRYKQLIAKGISAKLEDLLQDLQERDARDSSRGVAPLLVADGAKVLETSDLSIDQAVKTVLDWY.

Residue G11–T19 participates in ATP binding.

The protein belongs to the cytidylate kinase family. Type 1 subfamily.

It is found in the cytoplasm. The catalysed reaction is CMP + ATP = CDP + ADP. The enzyme catalyses dCMP + ATP = dCDP + ADP. In Polynucleobacter necessarius subsp. necessarius (strain STIR1), this protein is Cytidylate kinase.